The following is a 178-amino-acid chain: MDLLLLLFSAIWYILPAYVANAVPCILGGGKPVDFGKTFFDGNRIIGNGVTYRGTFFGILFGIITGILQHFIVILYMGPETVFDYGLFGYIILSFLLASGTLFGDMLGSFIKRRFKLNQGQSAPILDQITFIVFALLFAYPFYPLATNSIVLLLVISPIIHFSSNIIAYKLHLKKVWW.

5 helical membrane passes run 3–23 (LLLL…ANAV), 56–76 (FFGI…VILY), 87–107 (LFGY…GDML), 123–145 (APIL…FYPL), and 150–169 (IVLL…IIAY).

Belongs to the CDP-archaeol synthase family. The cofactor is Mg(2+).

Its subcellular location is the cell membrane. The catalysed reaction is 2,3-bis-O-(geranylgeranyl)-sn-glycerol 1-phosphate + CTP + H(+) = CDP-2,3-bis-O-(geranylgeranyl)-sn-glycerol + diphosphate. The protein operates within membrane lipid metabolism; glycerophospholipid metabolism. Catalyzes the formation of CDP-2,3-bis-(O-geranylgeranyl)-sn-glycerol (CDP-archaeol) from 2,3-bis-(O-geranylgeranyl)-sn-glycerol 1-phosphate (DGGGP) and CTP. This reaction is the third ether-bond-formation step in the biosynthesis of archaeal membrane lipids. This Methanococcus maripaludis (strain C6 / ATCC BAA-1332) protein is CDP-archaeol synthase.